The primary structure comprises 508 residues: Endoglucanase 6 (508 aa).

A signal peptide spans 1 to 33; the sequence is MLAASLRVEAVAVVAAAVLVLLLSPAAVVVVAG. The active-site Nucleophile is D89. Active-site residues include H419, D471, and E480.

It belongs to the glycosyl hydrolase 9 (cellulase E) family.

Its subcellular location is the secreted. It carries out the reaction Endohydrolysis of (1-&gt;4)-beta-D-glucosidic linkages in cellulose, lichenin and cereal beta-D-glucans.. This is Endoglucanase 6 from Oryza sativa subsp. japonica (Rice).